The chain runs to 395 residues: Chaperone protein DnaJ 1 (395 aa).

The J domain occupies 10-75 (DFYQELGVSS…AKRKEYDETR (66 aa)). The CR-type zinc finger occupies 164-242 (GVAMPLRLTS…CKGTGVTTRT (79 aa)). Residues Cys-177, Cys-180, Cys-194, Cys-197, Cys-216, Cys-219, Cys-230, and Cys-233 each coordinate Zn(2+). 4 CXXCXGXG motif repeats span residues 177–184 (CTNCHGSG), 194–201 (CPTCNGSG), 216–223 (CTDCRGSG), and 230–237 (CEECKGTG).

This sequence belongs to the DnaJ family. In terms of assembly, homodimer. Zn(2+) serves as cofactor.

It localises to the cytoplasm. Functionally, participates actively in the response to hyperosmotic and heat shock by preventing the aggregation of stress-denatured proteins and by disaggregating proteins, also in an autonomous, DnaK-independent fashion. Unfolded proteins bind initially to DnaJ; upon interaction with the DnaJ-bound protein, DnaK hydrolyzes its bound ATP, resulting in the formation of a stable complex. GrpE releases ADP from DnaK; ATP binding to DnaK triggers the release of the substrate protein, thus completing the reaction cycle. Several rounds of ATP-dependent interactions between DnaJ, DnaK and GrpE are required for fully efficient folding. Also involved, together with DnaK and GrpE, in the DNA replication of plasmids through activation of initiation proteins. This is Chaperone protein DnaJ 1 from Mycobacterium bovis (strain ATCC BAA-935 / AF2122/97).